The chain runs to 628 residues: Kelch-like protein diablo (628 aa).

The disordered stretch occupies residues 1 to 56 (MGDLPGSTGGGSGPAAAGNASGNSSSAGNTGLGVAGTTGVDRPPSPARLSHTSEKH). Positions 14 to 29 (PAAAGNASGNSSSAGN) are enriched in low complexity. The BTB domain occupies 74-141 (CDVVLNVGGR…CYTAHIIVEE (68 aa)). A BACK domain is found at 176 to 278 (CLGIRAFADT…SPKFLVGTVG (103 aa)). Kelch repeat units follow at residues 325–371 (VLFA…VLND), 373–419 (LYAV…VLDG), 420–466 (FLYA…VLGG), 468–513 (LYAI…VFNN), 515–560 (IYAV…VVNG), and 561–607 (QLYA…VMRA).

Its pathway is protein modification; protein ubiquitination. Functionally, probable substrate-specific adapter of an E3 ubiquitin-protein ligase complex which mediates the ubiquitination and subsequent proteasomal degradation of target proteins. May have a role in synapse differentiation and growth. In Drosophila persimilis (Fruit fly), this protein is Kelch-like protein diablo.